The following is a 324-amino-acid chain: Glyoxylate/hydroxypyruvate reductase B (324 aa).

Residues R237 and E266 contribute to the active site. Residue H285 is the Proton donor of the active site.

This sequence belongs to the D-isomer specific 2-hydroxyacid dehydrogenase family. GhrB subfamily. As to quaternary structure, homodimer.

The protein localises to the cytoplasm. The catalysed reaction is glycolate + NADP(+) = glyoxylate + NADPH + H(+). The enzyme catalyses (R)-glycerate + NAD(+) = 3-hydroxypyruvate + NADH + H(+). It carries out the reaction (R)-glycerate + NADP(+) = 3-hydroxypyruvate + NADPH + H(+). In terms of biological role, catalyzes the NADPH-dependent reduction of glyoxylate and hydroxypyruvate into glycolate and glycerate, respectively. The chain is Glyoxylate/hydroxypyruvate reductase B from Salmonella dublin (strain CT_02021853).